Reading from the N-terminus, the 249-residue chain is Syntaxin-10 (249 aa).

S2 carries the post-translational modification N-acetylserine. The Cytoplasmic portion of the chain corresponds to 2–228 (SLEDPFFVVR…VSHMTSDRRQ (227 aa)). A coiled-coil region spans residues 41 to 69 (EELDWTTNELRNGLRSIEWDLEDLEETIG). At S108 the chain carries Phosphoserine. A Phosphothreonine modification is found at T110. 3 positions are modified to phosphoserine: S134, S140, and S143. Residues 157 to 219 (QLIMDEQDQQ…DGVLRKLAKV (63 aa)) enclose the t-SNARE coiled-coil homology domain. Residues 229-249 (WCAIAVLVGVLLLVLILLFSL) traverse the membrane as a helical; Anchor for type IV membrane protein segment.

This sequence belongs to the syntaxin family. Interacts with VPS52. Expressed at high levels in heart, skeletal muscle and pancreas.

Its subcellular location is the golgi apparatus membrane. Its function is as follows. SNARE involved in vesicular transport from the late endosomes to the trans-Golgi network. The sequence is that of Syntaxin-10 (STX10) from Homo sapiens (Human).